The sequence spans 343 residues: Sulfate/thiosulfate import ATP-binding protein CysA (343 aa).

The ABC transporter domain maps to 3 to 233 (ILIENISKTF…PATPFVMGFM (231 aa)). 35–42 (GPSGSGKS) contacts ATP.

The protein belongs to the ABC transporter superfamily. Sulfate/tungstate importer (TC 3.A.1.6) family.

It is found in the plastid. The protein localises to the chloroplast. It catalyses the reaction sulfate(out) + ATP + H2O = sulfate(in) + ADP + phosphate + H(+). The enzyme catalyses thiosulfate(out) + ATP + H2O = thiosulfate(in) + ADP + phosphate + H(+). Functionally, part of the ABC transporter complex involved in sulfate/thiosulfate import. Responsible for energy coupling to the transport system. This chain is Sulfate/thiosulfate import ATP-binding protein CysA, found in Nephroselmis olivacea (Green alga).